Here is a 307-residue protein sequence, read N- to C-terminus: Transcription initiation factor IIB 5 (307 aa).

The TFIIB-type zinc-finger motif lies at 19 to 47; that stretch reads TTEPCPECGGPVRTNSAETVCADCGLIID. Zn(2+)-binding residues include C23, C26, C39, and C42. 2 stretches are compositionally biased toward basic and acidic residues: residues 54 to 66 and 107 to 121; these read GPEW…DTAK and MRRE…STKE. Residues 54 to 121 form a disordered region; the sequence is GPEWHRDDAD…SRGRWRSTKE (68 aa). 2 repeat units span residues 129–212 and 223–304.

This sequence belongs to the TFIIB family.

Stabilizes TBP binding to an archaeal box-A promoter. Also responsible for recruiting RNA polymerase II to the pre-initiation complex (DNA-TBP-TFIIB). This chain is Transcription initiation factor IIB 5, found in Halobacterium salinarum (strain ATCC 700922 / JCM 11081 / NRC-1) (Halobacterium halobium).